A 354-amino-acid polypeptide reads, in one-letter code: Protein RecA (354 aa).

Residue glycine 67–threonine 74 coordinates ATP. The tract at residues asparagine 331 to phenylalanine 354 is disordered. The span at glutamate 345–phenylalanine 354 shows a compositional bias: basic and acidic residues.

This sequence belongs to the RecA family.

The protein resides in the cytoplasm. Functionally, can catalyze the hydrolysis of ATP in the presence of single-stranded DNA, the ATP-dependent uptake of single-stranded DNA by duplex DNA, and the ATP-dependent hybridization of homologous single-stranded DNAs. It interacts with LexA causing its activation and leading to its autocatalytic cleavage. The polypeptide is Protein RecA (Citrobacter koseri (strain ATCC BAA-895 / CDC 4225-83 / SGSC4696)).